The following is a 481-amino-acid chain: Probable glycine dehydrogenase (decarboxylating) subunit 2 (481 aa).

Residues 1 to 23 are disordered; it reads MVIFEKTRGKNSPSVMPSKKGDV. K263 bears the N6-(pyridoxal phosphate)lysine mark.

Belongs to the GcvP family. C-terminal subunit subfamily. As to quaternary structure, the glycine cleavage system is composed of four proteins: P, T, L and H. In this organism, the P 'protein' is a heterodimer of two subunits. It depends on pyridoxal 5'-phosphate as a cofactor.

The catalysed reaction is N(6)-[(R)-lipoyl]-L-lysyl-[glycine-cleavage complex H protein] + glycine + H(+) = N(6)-[(R)-S(8)-aminomethyldihydrolipoyl]-L-lysyl-[glycine-cleavage complex H protein] + CO2. Functionally, the glycine cleavage system catalyzes the degradation of glycine. The P protein binds the alpha-amino group of glycine through its pyridoxal phosphate cofactor; CO(2) is released and the remaining methylamine moiety is then transferred to the lipoamide cofactor of the H protein. The polypeptide is Probable glycine dehydrogenase (decarboxylating) subunit 2 (Francisella philomiragia subsp. philomiragia (strain ATCC 25017 / CCUG 19701 / FSC 153 / O#319-036)).